Here is a 789-residue protein sequence, read N- to C-terminus: uncharacterized protein (789 aa).

5 disordered regions span residues 107–326 (YQQD…NNNN), 426–491 (MLKS…NNNN), 523–625 (SVNF…ISNN), 666–751 (THTF…KGNN), and 765–789 (PTRF…YNQH). A compositionally biased stretch (acidic residues) spans 113-123 (NNTDDEQEQEQ). Composition is skewed to low complexity over residues 124–141 (EQQQ…TPIK), 151–194 (TSQT…ITPI), 201–213 (SIST…LRSS), and 225–270 (TSST…THNS). Positions 274 to 290 (IDDDDGDNNDEINDEND) are enriched in acidic residues. Low complexity-rich tracts occupy residues 291–326 (INSN…NNNN) and 429–491 (SNNS…NNNN). A compositionally biased stretch (polar residues) spans 523 to 549 (SVNFDRNQNQKSPFLNNTSMPNINFNE). 4 stretches are compositionally biased toward low complexity: residues 550–581 (QSQQ…SINY), 602–617 (TSGS…NNSK), 696–722 (HIMN…SGSN), and 766–789 (TRFN…YNQH).

This is an uncharacterized protein from Dictyostelium discoideum (Social amoeba).